A 443-amino-acid chain; its full sequence is 3-phosphoshikimate 1-carboxyvinyltransferase (443 aa).

Residues Lys-24, Ser-25, and Arg-29 each coordinate 3-phosphoshikimate. Lys-24 contributes to the phosphoenolpyruvate binding site. Positions 96 and 124 each coordinate phosphoenolpyruvate. 3-phosphoshikimate-binding residues include Ser-168, Gln-170, Asp-316, and Lys-343. Gln-170 contacts phosphoenolpyruvate. The active-site Proton acceptor is Asp-316. Phosphoenolpyruvate contacts are provided by Arg-347 and Arg-391.

Belongs to the EPSP synthase family. Monomer.

It localises to the cytoplasm. It catalyses the reaction 3-phosphoshikimate + phosphoenolpyruvate = 5-O-(1-carboxyvinyl)-3-phosphoshikimate + phosphate. It participates in metabolic intermediate biosynthesis; chorismate biosynthesis; chorismate from D-erythrose 4-phosphate and phosphoenolpyruvate: step 6/7. In terms of biological role, catalyzes the transfer of the enolpyruvyl moiety of phosphoenolpyruvate (PEP) to the 5-hydroxyl of shikimate-3-phosphate (S3P) to produce enolpyruvyl shikimate-3-phosphate and inorganic phosphate. This is 3-phosphoshikimate 1-carboxyvinyltransferase from Dichelobacter nodosus (Bacteroides nodosus).